A 193-amino-acid chain; its full sequence is Small COPII coat GTPase SAR1 (193 aa).

Positions 3–5 (FLW) match the STAR; SAR1-N-terminal activation recruitment. Required for the activation and subsequent recruitment to ER membrane motif. A mediates recruitment to ER membranes region spans residues 11-15 (VLNML). D30 provides a ligand contact to Mg(2+). Positions 31, 32, 33, 34, 35, and 36 each coordinate GDP. N31 serves as a coordination point for GTP. G33, K34, T35, and T36 together coordinate GTP. Residue D71 coordinates Mg(2+). Residues N130, K131, D133, V176, and L177 each coordinate GDP. GTP contacts are provided by N130, K131, D133, V176, and L177.

Belongs to the small GTPase superfamily. SAR1 family. Homodimer; upon association with membrane. Part of the coat protein complex II/COPII, composed of SEC23/24 and SEC13/31 heterodimers, that it helps recruit and assemble on endoplasmic reticulum (ER) membranes at ER exit sites.

The protein localises to the endoplasmic reticulum membrane. It is found in the golgi apparatus. It localises to the golgi stack membrane. The protein resides in the cytoplasm. Its subcellular location is the cytosol. It carries out the reaction GTP + H2O = GDP + phosphate + H(+). Small GTPases activation is mediated by guanine exchange factors (GEF), while inactivation through hydrolysis of the bound GTP is stimulated by GTPase activating proteins (GAP). In terms of biological role, small GTPase that cycles between an active GTP-bound and an inactive GDP-bound state and mainly functions in vesicle-mediated endoplasmic reticulum (ER) to Golgi transport. The active GTP-bound form inserts into the endoplasmic reticulum membrane where it recruits the remainder of the coat protein complex II/COPII. The coat protein complex II assembling and polymerizing on endoplasmic reticulum membrane is responsible for both the sorting of cargos and the deformation and budding of membranes into vesicles destined to the Golgi. Plays a role in transporting the tyrosine kinase receptor let-23 from the endoplasmic reticulum to the plasma membrane of vulval precursor cells. The sequence is that of Small COPII coat GTPase SAR1 from Caenorhabditis elegans.